Consider the following 163-residue polypeptide: MSKKRRQRGSRTHGGGSHKNRRGAGHRGGRGNAGRDKHEFHNHEPLGKSGFKRPQKTRRDVETVNLRELDEDIAVLVEDGIAEESDDGYVVDARDVVEDGYEADVVKVLGAGTVYNELEIVADAFSESAEQALEVADGEAVLSERGEELEAEKDSTDEEDEES.

Basic residues predominate over residues 1-29; sequence MSKKRRQRGSRTHGGGSHKNRRGAGHRGG. Disordered stretches follow at residues 1-59 and 135-163; these read MSKK…KTRR and VADG…DEES. Composition is skewed to basic and acidic residues over residues 33-46 and 142-154; these read AGRD…HEPL and LSER…AEKD.

This sequence belongs to the universal ribosomal protein uL15 family. In terms of assembly, part of the 50S ribosomal subunit.

Its function is as follows. Binds to the 23S rRNA. In Natronomonas pharaonis (strain ATCC 35678 / DSM 2160 / CIP 103997 / JCM 8858 / NBRC 14720 / NCIMB 2260 / Gabara) (Halobacterium pharaonis), this protein is Large ribosomal subunit protein uL15.